Here is a 208-residue protein sequence, read N- to C-terminus: Large ribosomal subunit protein bL25 (208 aa).

The protein belongs to the bacterial ribosomal protein bL25 family. CTC subfamily. As to quaternary structure, part of the 50S ribosomal subunit; part of the 5S rRNA/L5/L18/L25 subcomplex. Contacts the 5S rRNA. Binds to the 5S rRNA independently of L5 and L18.

This is one of the proteins that binds to the 5S RNA in the ribosome where it forms part of the central protuberance. The chain is Large ribosomal subunit protein bL25 from Burkholderia pseudomallei (strain K96243).